The sequence spans 509 residues: UDP-N-acetylmuramoyl-L-alanyl-D-glutamate--2,6-diaminopimelate ligase (509 aa).

Position 32 (serine 32) interacts with UDP-N-acetyl-alpha-D-muramoyl-L-alanyl-D-glutamate. An ATP-binding site is contributed by 117 to 123 (GTNGKTT). UDP-N-acetyl-alpha-D-muramoyl-L-alanyl-D-glutamate contacts are provided by residues 159–160 (TT), serine 186, glutamine 192, and arginine 194. N6-carboxylysine is present on lysine 226. Residues arginine 401, 425–428 (DNPR), glycine 476, and glutamate 480 each bind meso-2,6-diaminopimelate. A Meso-diaminopimelate recognition motif motif is present at residues 425-428 (DNPR).

This sequence belongs to the MurCDEF family. MurE subfamily. It depends on Mg(2+) as a cofactor. In terms of processing, carboxylation is probably crucial for Mg(2+) binding and, consequently, for the gamma-phosphate positioning of ATP.

It localises to the cytoplasm. It carries out the reaction UDP-N-acetyl-alpha-D-muramoyl-L-alanyl-D-glutamate + meso-2,6-diaminopimelate + ATP = UDP-N-acetyl-alpha-D-muramoyl-L-alanyl-gamma-D-glutamyl-meso-2,6-diaminopimelate + ADP + phosphate + H(+). It functions in the pathway cell wall biogenesis; peptidoglycan biosynthesis. In terms of biological role, catalyzes the addition of meso-diaminopimelic acid to the nucleotide precursor UDP-N-acetylmuramoyl-L-alanyl-D-glutamate (UMAG) in the biosynthesis of bacterial cell-wall peptidoglycan. The chain is UDP-N-acetylmuramoyl-L-alanyl-D-glutamate--2,6-diaminopimelate ligase from Prochlorococcus marinus (strain NATL2A).